Consider the following 685-residue polypeptide: Nucleolar protein 4 (685 aa).

A disordered region spans residues 1-21; sequence MEETIENVEVPSSNVSKQNDD. Residues 26-103 enclose the RRM 1 domain; sequence KTLFVRSIPQ…HILRVDIAKR (78 aa). Residues 106–123 show a composition bias toward basic and acidic residues; sequence RSKKTSEVVEKSTPESSE. Residues 106–142 form a disordered region; that stretch reads RSKKTSEVVEKSTPESSEKITGQNNEDEDDADGEDSM. Acidic residues predominate over residues 130 to 140; that stretch reads NEDEDDADGED. The 79-residue stretch at 147–225 folds into the RRM 2 domain; it reads PKLIIRNMPW…RKVAVDFAVQ (79 aa). Basic and acidic residues predominate over residues 231-242; the sequence is DYKKAQPEMNDK. The tract at residues 231-285 is disordered; sequence DYKKAQPEMNDKDDNESGNEDAEENHDDEEDENEEEDRQVDQASKNKESKRKAQN. Residues 243 to 268 show a composition bias toward acidic residues; it reads DDNESGNEDAEENHDDEEDENEEEDR. A Phosphoserine modification is found at serine 247. RRM domains follow at residues 290–383 and 462–612; these read FSVF…PTLV and TRLA…FAIE. Position 379 is a phosphothreonine (threonine 379). A compositionally biased stretch (basic residues) spans 622–631; the sequence is EQLKQARTKR. Residues 622-685 form a disordered region; it reads EQLKQARTKR…FKRKRKHAKK (64 aa). Residues 645–672 are compositionally biased toward basic and acidic residues; that stretch reads SENKKPKKEEATTPTNPDDKKMGDDIKR. Positions 674 to 685 are enriched in basic residues; the sequence is IGFKRKRKHAKK.

As to quaternary structure, interacts with NOP1.

The protein localises to the nucleus. The protein resides in the nucleolus. Functionally, required for 60S ribosomal subunit synthesis. Probably involved in the processing of 27S rRNA to produce mature 25S rRNA. This is Nucleolar protein 4 (NOP4) from Saccharomyces cerevisiae (strain ATCC 204508 / S288c) (Baker's yeast).